Consider the following 271-residue polypeptide: Aminodeoxychorismate lyase (271 aa).

N6-(pyridoxal phosphate)lysine is present on Lys-140.

This sequence belongs to the class-IV pyridoxal-phosphate-dependent aminotransferase family. In terms of assembly, homodimer. Pyridoxal 5'-phosphate serves as cofactor.

It carries out the reaction 4-amino-4-deoxychorismate = 4-aminobenzoate + pyruvate + H(+). It functions in the pathway cofactor biosynthesis; tetrahydrofolate biosynthesis; 4-aminobenzoate from chorismate: step 2/2. Functionally, involved in the biosynthesis of p-aminobenzoate (PABA), a precursor of tetrahydrofolate. Converts 4-amino-4-deoxychorismate into 4-aminobenzoate (PABA) and pyruvate. The protein is Aminodeoxychorismate lyase (pabC) of Vibrio harveyi (Beneckea harveyi).